The sequence spans 210 residues: Large ribosomal subunit protein uL3 (210 aa).

Positions 134-153 (THGNSLSHRAPGSIGQNQTP) are disordered. At glutamine 151 the chain carries N5-methylglutamine.

This sequence belongs to the universal ribosomal protein uL3 family. Part of the 50S ribosomal subunit. Forms a cluster with proteins L14 and L19. Methylated by PrmB.

Its function is as follows. One of the primary rRNA binding proteins, it binds directly near the 3'-end of the 23S rRNA, where it nucleates assembly of the 50S subunit. This chain is Large ribosomal subunit protein uL3, found in Aeromonas salmonicida (strain A449).